Here is a 125-residue protein sequence, read N- to C-terminus: Mini-ribonuclease 3 (125 aa).

The active site involves aspartate 11.

Belongs to the MrnC RNase family. As to quaternary structure, homodimer. Requires Mg(2+) as cofactor.

It localises to the cytoplasm. Functionally, involved in correct processing of both the 5' and 3' ends of 23S rRNA precursor. Processes 30S rRNA precursor transcript even in absence of ribonuclease 3 (Rnc); Rnc processes 30S rRNA into smaller rRNA precursors. This chain is Mini-ribonuclease 3, found in Acholeplasma laidlawii (strain PG-8A).